Here is a 153-residue protein sequence, read N- to C-terminus: Transcription antitermination protein NusB (153 aa).

This sequence belongs to the NusB family.

Its function is as follows. Involved in transcription antitermination. Required for transcription of ribosomal RNA (rRNA) genes. Binds specifically to the boxA antiterminator sequence of the ribosomal RNA (rrn) operons. In Beutenbergia cavernae (strain ATCC BAA-8 / DSM 12333 / CCUG 43141 / JCM 11478 / NBRC 16432 / NCIMB 13614 / HKI 0122), this protein is Transcription antitermination protein NusB.